A 323-amino-acid chain; its full sequence is Elongation factor P--(R)-beta-lysine ligase (323 aa).

76–78 (SPE) is a binding site for substrate. ATP-binding positions include 100 to 102 (RNE) and Asn109. Tyr118 lines the substrate pocket. 242 to 243 (EL) lines the ATP pocket. Glu249 serves as a coordination point for substrate. Residue Gly298 participates in ATP binding.

The protein belongs to the class-II aminoacyl-tRNA synthetase family. EpmA subfamily. As to quaternary structure, homodimer.

It catalyses the reaction D-beta-lysine + L-lysyl-[protein] + ATP = N(6)-((3R)-3,6-diaminohexanoyl)-L-lysyl-[protein] + AMP + diphosphate + H(+). With EpmB is involved in the beta-lysylation step of the post-translational modification of translation elongation factor P (EF-P). Catalyzes the ATP-dependent activation of (R)-beta-lysine produced by EpmB, forming a lysyl-adenylate, from which the beta-lysyl moiety is then transferred to the epsilon-amino group of a conserved specific lysine residue in EF-P. This Pasteurella multocida (strain Pm70) protein is Elongation factor P--(R)-beta-lysine ligase.